A 438-amino-acid polypeptide reads, in one-letter code: Probable 26S proteasome regulatory subunit rpn-6.1 (438 aa).

Over residues 1–10 the composition is skewed to basic and acidic residues; sequence MRETSSREDT. Residues 1–30 are disordered; sequence MRETSSREDTNNIGKAPEMSGGTIMDTMTS. The PCI domain maps to 239–408; it reads DFKTAFSYFY…GMLIVFEIAV (170 aa).

Belongs to the proteasome subunit S9 family. In terms of assembly, component of the lid subcomplex of the 19S proteasome regulatory particle complex (also named PA700 complex). The 26S proteasome consists of a 20S proteasome core and two 19S regulatory subunits.

Component of the lid subcomplex of the 26S proteasome, a multiprotein complex involved in the ATP-dependent degradation of ubiquitinated proteins. In the complex, rpn-6.1 is required for proteasome assembly. Plays a key role in increased proteasome activity in response to proteotoxic stress: induced by daf-16, promoting enhanced assembly of the 26S proteasome and higher proteasome activity, leading to extended lifespan. The sequence is that of Probable 26S proteasome regulatory subunit rpn-6.1 from Caenorhabditis elegans.